Here is a 616-residue protein sequence, read N- to C-terminus: Heme A synthase-mitochondrial ferredoxin fusion protein (616 aa).

A mitochondrion-targeting transit peptide spans 1 to 45; that stretch reads MNISRSSGLMRQFLLQPLRKGCDISCLGRSSWRMSRSFSGSSVLN. The interval 45-465 is heme a synthase cox15-like; it reads NEINLSRTKN…AALSLAQRLH (421 aa). The Mitochondrial matrix portion of the chain corresponds to 46–97; that stretch reads EINLSRTKNLFLNDCKFNKNSFEKFFARRLSNSVAPTPGGILQETEKIPSKK. The chain crosses the membrane as a helical span at residues 98 to 118; it reads VAFWLLGSSALVLAIVVVGGI. Residues 119–182 are Mitochondrial intermembrane-facing; the sequence is TRLTESGLSI…NIFFWEWFHR (64 aa). Histidine 181 lines the heme o pocket. Residues 183-203 traverse the membrane as a helical segment; the sequence is VLGRGIGLTILLPSIYMIVTK. Residues 204–212 lie on the Mitochondrial matrix side of the membrane; that stretch reads RASPWLSKR. The chain crosses the membrane as a helical span at residues 213 to 233; that stretch reads LIGLTGLVGLQGVIGWWMVKS. Residues 234–254 lie on the Mitochondrial intermembrane side of the membrane; sequence GLSEELFSDGSHPRVSHYRLA. A helical transmembrane segment spans residues 255 to 275; that stretch reads THLAAAVALYIGLVWTGHGIL. Histidine 256 contacts heme o. At 276–311 the chain is on the mitochondrial matrix side; sequence QRHAFLKSMKSGSTSQLTSMVSSVQKMKGFRTSVNS. The helical transmembrane segment at 312-332 threads the bilayer; the sequence is FVGLVLITLLSGAFVAGLDAG. Residues 333–380 lie on the Mitochondrial intermembrane side of the membrane; sequence MIYCTFPEMGEGRLAPSKSELFDQRFCRKDDKSDLIWRNMIDNPSLVQ. Residues 381–401 traverse the membrane as a helical segment; the sequence is LEHRILAITTFVAACGLFIFS. Histidine 383 provides a ligand contact to heme b. The Mitochondrial matrix portion of the chain corresponds to 402–417; it reads RAKRNILPKKIKTSIN. The chain crosses the membrane as a helical span at residues 418–438; that stretch reads VVTGVVTAQATLGIMTLIYVV. A topological domain (mitochondrial intermembrane) is located at residue proline 439. A helical transmembrane segment spans residues 440-460; sequence VPLAALHQAGSLVTLTAALSL. Histidine 446 provides a ligand contact to heme b. The Mitochondrial matrix portion of the chain corresponds to 461-616; sequence AQRLHPEYAL…RNIRLERPKA (156 aa). Residues 502–606 enclose the 2Fe-2S ferredoxin-type domain; that stretch reads FRPSFHSEIK…GIRVRIPAQT (105 aa). The segment at 516–616 is mitochondrial ferredoxin yah1-like; sequence GTGIKVFFVT…RNIRLERPKA (101 aa). [2Fe-2S] cluster contacts are provided by cysteine 541, cysteine 547, cysteine 550, and cysteine 587.

The protein in the N-terminal section; belongs to the COX15/CtaA family. Type 2 subfamily. This sequence in the C-terminal section; belongs to the adrenodoxin/putidaredoxin family. Homodimer. The cofactor is heme b. Requires [2Fe-2S] cluster as cofactor. In terms of processing, the etp1 preprotein is cleaved into 2 chains after imort into mitochondria. The N-terminal chain containing a heme A synthase cox15-like domain etp1(cd) is a subunit of the membrane-embedded cytochrome c oxidase complex and functions in the respiratory chain. The C-terminal chain containing a ferredoxin yah1-like domain etp1(fd) is released and serves in the matrix as electron transfer protein.

It localises to the mitochondrion inner membrane. It is found in the mitochondrion matrix. It carries out the reaction Fe(II)-heme o + 2 A + H2O = Fe(II)-heme a + 2 AH2. It functions in the pathway porphyrin-containing compound metabolism; heme A biosynthesis; heme A from heme O: step 1/1. Functionally, catalyzes the second reaction in the biosynthesis of heme A, a prosthetic group of mitochondrial cytochrome c oxidase (CcO). Heme A is synthesized from heme B by two sequential enzymatic reactions catalyzed by heme O synthase (HOS) and heme A synthase (HAS). HAS catalyzes the conversion of heme O to heme A by two successive hydroxylations of the methyl group at C8, in a reaction that involves matrix ferredoxin and ferredoxin reductase. The first hydroxylation forms heme I, the second hydroxylation results in an unstable dihydroxymethyl group, which spontaneously dehydrates, resulting in the formyl group of heme A. In terms of biological role, iron-sulfur protein that transfers electrons in a wide variety of metabolic reactions. Involved in heme A biosynthesis and in iron-sulfur cluster assembly. Transfers electrons from adrenodoxin reductase arh1 to heme A synthase etp1(cd), a heme protein that catalyzes the conversion of heme O to heme A. Required for the de novo synthesis of Fe-S clusters on iron sulfur cluster assembly protein isu1. Interact in its reduced state with isu1 to productively deliver electrons for Fe-S cluster synthesis. Essential for coenzyme Q biosynthesis. May transfer the electrons required for the hydroxylation reaction performed by coq6. The sequence is that of Heme A synthase-mitochondrial ferredoxin fusion protein from Schizosaccharomyces pombe (strain 972 / ATCC 24843) (Fission yeast).